We begin with the raw amino-acid sequence, 118 residues long: Large ribosomal subunit protein eL18 (118 aa).

The protein belongs to the eukaryotic ribosomal protein eL18 family.

In Sulfurisphaera tokodaii (strain DSM 16993 / JCM 10545 / NBRC 100140 / 7) (Sulfolobus tokodaii), this protein is Large ribosomal subunit protein eL18.